The following is an 84-amino-acid chain: Large ribosomal subunit protein bL27 (84 aa).

The disordered stretch occupies residues 1–22 (MAHKKAGGSTRNGRDSESKRLG).

Belongs to the bacterial ribosomal protein bL27 family.

In Shewanella baltica (strain OS223), this protein is Large ribosomal subunit protein bL27.